Consider the following 148-residue polypeptide: UPF0756 membrane protein Ent638_1667 (148 aa).

Helical transmembrane passes span 14–34 (ALGF…LIIV), 51–71 (LTIG…SGTL), 86–106 (LIAI…VTLM), and 121–141 (VLGV…AGLV).

Belongs to the UPF0756 family.

It localises to the cell membrane. In Enterobacter sp. (strain 638), this protein is UPF0756 membrane protein Ent638_1667.